Reading from the N-terminus, the 77-residue chain is uncharacterized protein (77 aa).

This is an uncharacterized protein from Bacillus licheniformis.